We begin with the raw amino-acid sequence, 567 residues long: MSASTGGGGDSGGSGGSSSSSQASCGPESSGSELALATPVPQMLQGLLGSDDEEQEDPKDYCKGGYHPVKIGDVFNGRYHVVRKLGWGHFSTVWLCWDIQRKRFVALKVVKSAGHYTETAVDEIKLLKCVRDSDPSDPKRETIVQLIDDFRISGVNGVHVCMVLEVLGHQLLKWIIKSNYQGLPVPCVKSIVRQVLHGLDYLHTKCKIIHTDIKPENILLCVGDAYIRRLAAEATEWQQAGAPPPSRSIVSTAPQEVLQTGKLSKNKRKKMRRKRKQQKRLLEERLRDLQRLEAMEAATQAEDSGLRLDGGSGSTSSSGCHPGGARAGPSPASSSPAPGGGRSLSAGSQTSGFSGSLFSPASCSILSGSSNQRETGGLLSPSTPFGASNLLVNPLEPQNADKIKIKIADLGNACWVHKHFTEDIQTRQYRAVEVLIGAEYGPPADIWSTACMAFELATGDYLFEPHSGEDYSRDEDHIAHIVELLGDIPPAFALSGRYSREFFNRRGELRHIHNLKHWGLYEVLMEKYEWPLEQATQFSAFLLPMMEYIPEKRASAADCLQHPWLNP.

Residues 1-16 (MSASTGGGGDSGGSGG) show a composition bias toward gly residues. The disordered stretch occupies residues 1 to 36 (MSASTGGGGDSGGSGGSSSSSQASCGPESSGSELAL). Over residues 17–32 (SSSSSQASCGPESSGS) the composition is skewed to low complexity. Residue Ser-50 is modified to Phosphoserine. The 487-residue stretch at 79–565 (YHVVRKLGWG…AADCLQHPWL (487 aa)) folds into the Protein kinase domain. ATP-binding positions include 85–93 (LGWGHFSTV) and Lys-108. The active-site Proton acceptor is Asp-212. 2 disordered regions span residues 238–283 (QQAG…RLLE) and 298–351 (ATQA…SQTS). The segment covering 248-258 (SIVSTAPQEVL) has biased composition (polar residues). Basic residues predominate over residues 264–279 (SKNKRKKMRRKRKQQK). Low complexity predominate over residues 327–348 (AGPSPASSSPAPGGGRSLSAGS). Ser-330 is modified (phosphoserine).

Belongs to the protein kinase superfamily. CMGC Ser/Thr protein kinase family. As to expression, expressed in skeletal and heart muscle. Also expressed in the fetal brain.

Its subcellular location is the nucleus. The protein localises to the cytoplasm. The catalysed reaction is L-seryl-[protein] + ATP = O-phospho-L-seryl-[protein] + ADP + H(+). The enzyme catalyses L-threonyl-[protein] + ATP = O-phospho-L-threonyl-[protein] + ADP + H(+). Its function is as follows. Serine/arginine-rich protein-specific kinase which specifically phosphorylates its substrates at serine residues located in regions rich in arginine/serine dipeptides, known as RS domains. Phosphorylates the SR splicing factor SRSF1 and the lamin-B receptor (LBR) in vitro. Required for normal muscle development. This is SRSF protein kinase 3 (SRPK3) from Homo sapiens (Human).